A 285-amino-acid polypeptide reads, in one-letter code: Polyamine aminopropyltransferase (285 aa).

Residues glutamine 5–lysine 241 enclose the PABS domain. Glutamine 35 provides a ligand contact to S-methyl-5'-thioadenosine. Residues histidine 66 and aspartate 90 each contribute to the spermidine site. Residues aspartate 110 and aspartate 141–glycine 142 each bind S-methyl-5'-thioadenosine. The active-site Proton acceptor is the aspartate 160. Aspartate 160–aspartate 163 is a binding site for spermidine. Residue proline 167 participates in S-methyl-5'-thioadenosine binding.

Belongs to the spermidine/spermine synthase family. As to quaternary structure, homodimer or homotetramer.

It localises to the cytoplasm. The catalysed reaction is S-adenosyl 3-(methylsulfanyl)propylamine + putrescine = S-methyl-5'-thioadenosine + spermidine + H(+). It participates in amine and polyamine biosynthesis; spermidine biosynthesis; spermidine from putrescine: step 1/1. Its function is as follows. Catalyzes the irreversible transfer of a propylamine group from the amino donor S-adenosylmethioninamine (decarboxy-AdoMet) to putrescine (1,4-diaminobutane) to yield spermidine. This Methylococcus capsulatus (strain ATCC 33009 / NCIMB 11132 / Bath) protein is Polyamine aminopropyltransferase.